The chain runs to 121 residues: Small ribosomal subunit protein uS13 (121 aa).

The disordered stretch occupies residues 91 to 121 (HRMSLPVRGQRTRTNARTRRGSRKTVAGRKK). Positions 100–121 (QRTRTNARTRRGSRKTVAGRKK) are enriched in basic residues.

Belongs to the universal ribosomal protein uS13 family. As to quaternary structure, part of the 30S ribosomal subunit. Forms a loose heterodimer with protein S19. Forms two bridges to the 50S subunit in the 70S ribosome.

Its function is as follows. Located at the top of the head of the 30S subunit, it contacts several helices of the 16S rRNA. In the 70S ribosome it contacts the 23S rRNA (bridge B1a) and protein L5 of the 50S subunit (bridge B1b), connecting the 2 subunits; these bridges are implicated in subunit movement. Contacts the tRNAs in the A and P-sites. This is Small ribosomal subunit protein uS13 from Prochlorococcus marinus (strain AS9601).